We begin with the raw amino-acid sequence, 523 residues long: Endoglucanase 19 (523 aa).

The signal sequence occupies residues Met1–Ala52. The active-site Nucleophile is the Asp107. N-linked (GlcNAc...) asparagine glycosylation is present at Asn279. Active-site residues include His442, Asp493, and Glu502.

The protein belongs to the glycosyl hydrolase 9 (cellulase E) family.

The protein localises to the secreted. The enzyme catalyses Endohydrolysis of (1-&gt;4)-beta-D-glucosidic linkages in cellulose, lichenin and cereal beta-D-glucans.. This is Endoglucanase 19 from Oryza sativa subsp. japonica (Rice).